The chain runs to 380 residues: Cytochrome b (380 aa).

The next 4 membrane-spanning stretches (helical) occupy residues 34 to 54 (FGSL…LLAM), 78 to 99 (WLIR…FLHI), 114 to 134 (WNTG…GYVL), and 179 to 199 (FFAL…IHLT). Residues His84 and His98 each contribute to the heme b site. The heme b site is built by His183 and His197. His202 lines the a ubiquinone pocket. The next 4 helical transmembrane spans lie at 227-247 (IKDI…ALFS), 289-309 (LGGV…PFLH), 321-341 (LSQT…WIGS), and 348-368 (FIII…ILFP).

It belongs to the cytochrome b family. The cytochrome bc1 complex contains 11 subunits: 3 respiratory subunits (MT-CYB, CYC1 and UQCRFS1), 2 core proteins (UQCRC1 and UQCRC2) and 6 low-molecular weight proteins (UQCRH/QCR6, UQCRB/QCR7, UQCRQ/QCR8, UQCR10/QCR9, UQCR11/QCR10 and a cleavage product of UQCRFS1). This cytochrome bc1 complex then forms a dimer. Heme b is required as a cofactor.

It is found in the mitochondrion inner membrane. Functionally, component of the ubiquinol-cytochrome c reductase complex (complex III or cytochrome b-c1 complex) that is part of the mitochondrial respiratory chain. The b-c1 complex mediates electron transfer from ubiquinol to cytochrome c. Contributes to the generation of a proton gradient across the mitochondrial membrane that is then used for ATP synthesis. In Alectoris rufa (Red-legged partridge), this protein is Cytochrome b (MT-CYB).